Reading from the N-terminus, the 179-residue chain is Cytochrome c-type biogenesis protein CcmE (179 aa).

Over 1–8 the chain is Cytoplasmic; sequence MTPRRKSR. Residues 9-29 traverse the membrane as a helical; Signal-anchor for type II membrane protein segment; it reads MTVILFVLLGISIASALVLYA. At 30-179 the chain is on the periplasmic side; that stretch reads LRQNIDLFYT…QKTSMQEGQK (150 aa). H131 and Y135 together coordinate heme. Residues 151–179 are disordered; sequence MGVADLKGESERDRQEKAYQKTSMQEGQK. Basic and acidic residues predominate over residues 156–169; the sequence is LKGESERDRQEKAY. The span at 170 to 179 shows a compositional bias: polar residues; the sequence is QKTSMQEGQK.

This sequence belongs to the CcmE/CycJ family.

The protein localises to the cell inner membrane. Functionally, heme chaperone required for the biogenesis of c-type cytochromes. Transiently binds heme delivered by CcmC and transfers the heme to apo-cytochromes in a process facilitated by CcmF and CcmH. This is Cytochrome c-type biogenesis protein CcmE from Pasteurella multocida (strain Pm70).